Here is a 169-residue protein sequence, read N- to C-terminus: Myelin basic protein (169 aa).

Alanine 1 carries the N-acetylalanine modification. The tract at residues alanine 1–serine 114 is disordered. Phosphoserine; in C5 and C6 is present on serine 7. At serine 10 the chain carries Phosphoserine. Residue tyrosine 12 is modified to Phosphotyrosine. At serine 17 the chain carries Phosphoserine. Threonine 18 is subject to Phosphothreonine. Arginine 23 carries the citrulline; in form C8b modification. The residue at position 29 (arginine 29) is a Citrulline. Threonine 33 carries the phosphothreonine modification. Residue serine 38 is modified to Phosphoserine. Arginine 41 carries the post-translational modification Citrulline; alternate. Position 41 is an omega-N-methylarginine; alternate (arginine 41). Positions phenylalanine 43–histidine 87 are induces experimental autoimmune encephalomyelitis (EAE) 1. The residue at position 47 (arginine 47) is a Citrulline; in form C8b. Position 47 is an omega-N-methylarginine (arginine 47). At serine 54 the chain carries Phosphoserine; in C4, C5 and C6. Arginine 63 is subject to Citrulline. Residue threonine 65 is modified to Phosphothreonine. Position 67 is a phosphotyrosine (tyrosine 67). Phosphothreonine is present on threonine 94. Arginine 96 carries the citrulline; in form C2, C3, C8a and C8b modification. A Phosphothreonine; by MAPK; in C3, C4, C5 and C6 modification is found at threonine 97. Position 102 is a deamidated glutamine; in form C5 (glutamine 102). Arginine 106 bears the Citrulline; alternate mark. Residue arginine 106 is modified to Omega-N-methylarginine; alternate. Arginine 106 carries the symmetric dimethylarginine; alternate modification. Arginine 112 bears the Citrulline mark. Serine 114 is subject to Phosphoserine. An induces experimental autoimmune encephalomyelitis (EAE) 2 region spans residues serine 114–proline 122. Glutamine 120 is subject to Deamidated glutamine; in form C3. Lysine 121 is modified (N6-acetyllysine). A Citrulline modification is found at arginine 129. Residues tyrosine 133–arginine 169 form a disordered region. Glutamine 146 carries the deamidated glutamine; in form C2 modification. A Citrulline modification is found at arginine 158. At serine 160 the chain carries Phosphoserine; in C4 and C6. Arginine 161 is modified (citrulline; in form C3). Phosphoserine; in form C3, C5 and C6 is present on serine 164. Residues arginine 168 and arginine 169 each carry the citrulline modification.

This sequence belongs to the myelin basic protein family. Homodimer; self-associates in the presence of lysolipid. In terms of processing, at least 6 charge isomers; C1 (the most cationic and least modified form), C2, C3, C4, C5 and C6 (the least cationic form); are produced as a result of optional post-translational modifications, such as phosphorylation of serine or threonine residues, deamidation of glutamine or asparagine residues, citrullination and methylation of arginine residues. Phosphorylated by TAOK2, VRK2, MAPK11, MAPK12, MAPK14 and MINK1. Post-translationally, proteolytically cleaved in B cell lysosomes by cathepsin CTSG which degrades the major immunogenic MBP epitope and prevents the activation of MBP-specific autoreactive T cells. As to expression, found in both the central and the peripheral nervous system.

It localises to the myelin membrane. In terms of biological role, is, with PLP, the most abundant protein component of the myelin membrane in the CNS. Has a role in both the formation and stabilization of this compact multilayer arrangement of bilayers. Each splice variant and charge isomer may have a specialized function in the assembly of an optimized, biochemically functional myelin membrane. The chain is Myelin basic protein (MBP) from Bos taurus (Bovine).